The following is a 354-amino-acid chain: DNA integrity scanning protein DisA (354 aa).

The DAC domain occupies 6-144; the sequence is DDELKKILKI…GDIKYVLRDS (139 aa). ATP contacts are provided by residues Gly-73, Leu-91, and 104–108; that span reads TRHRT.

It belongs to the DisA family. Homooctamer. The cofactor is Mg(2+).

The catalysed reaction is 2 ATP = 3',3'-c-di-AMP + 2 diphosphate. Participates in a DNA-damage check-point that is active prior to asymmetric division when DNA is damaged. DisA forms globular foci that rapidly scan along the chromosomes during sporulation, searching for lesions. When a lesion is present, DisA pauses at the lesion site. This triggers a cellular response that culminates in a temporary block in sporulation initiation. Its function is as follows. Also has diadenylate cyclase activity, catalyzing the condensation of 2 ATP molecules into cyclic di-AMP (c-di-AMP). c-di-AMP acts as a signaling molecule that couples DNA integrity with progression of sporulation. The rise in c-di-AMP level generated by DisA while scanning the chromosome, operates as a positive signal that advances sporulation; upon encountering a lesion, the DisA focus arrests at the damaged site and halts c-di-AMP synthesis. The polypeptide is DNA integrity scanning protein DisA (Clostridium perfringens (strain 13 / Type A)).